Here is a 543-residue protein sequence, read N- to C-terminus: MARYIFITGGVVSSLGKGLASAALGALLQARGYKVRLRKLDPYLNLDPGTMSPYQHGEVFVTDDGAETDLDLGHYERFTGRPATKADNITTGRIYQDIITKERRGDYLGATIQVVPHVTNAIKEFVLDGNDDYDFVLVEIGGTVGDIEGLPFFEAIRQLKNDLPRDHAVYIHLTLLPYIPSAGELKTKPTQHSVKELRSIGIQPDILLCRTDREIPKEERRKLGLFCNVRESAVIEARDVDNIYAVPEAYHNAGLDDEVLAAFGIASRIPPELRSWQQINERVRNPEGNVTIAIVGKYTGMKDAYKSLIEALSHGGIANKVKVNLDWIESEIFEKEDPAPFLEHVNGILVPGGFGQRGAEGKIRAAQFARERDVPYFGICFGMQMAVIEAARNLVGIEDANSTEFGPTKEPLVGLMTEWLRGNELEKRSQAGDLGGTMRLGAYPAALNRGSRVSQVYGGATEISERHRHRYEVNTAYKDRLEQHGLKFSGLSPDGVLPEIVEYEDHPWFIGVQFHPELKSRPFEPHPLFASFIQAAMVQSRLV.

An amidoligase domain region spans residues 1-265 (MARYIFITGG…DDEVLAAFGI (265 aa)). A CTP-binding site is contributed by serine 13. Serine 13 contributes to the UTP binding site. 14-19 (SLGKGL) lines the ATP pocket. Tyrosine 54 is a binding site for L-glutamine. Residue aspartate 71 participates in ATP binding. Mg(2+)-binding residues include aspartate 71 and glutamate 139. Residues 146 to 148 (DIE), 186 to 191 (KTKPTQ), and lysine 222 each bind CTP. Residues 186-191 (KTKPTQ) and lysine 222 each bind UTP. 238–240 (RDV) provides a ligand contact to ATP. The 252-residue stretch at 291-542 (TIAIVGKYTG…IQAAMVQSRL (252 aa)) folds into the Glutamine amidotransferase type-1 domain. Position 353 (glycine 353) interacts with L-glutamine. Catalysis depends on cysteine 380, which acts as the Nucleophile; for glutamine hydrolysis. L-glutamine contacts are provided by residues 381 to 384 (FGMQ), glutamate 404, and arginine 470. Active-site residues include histidine 515 and glutamate 517.

The protein belongs to the CTP synthase family. As to quaternary structure, homotetramer.

It carries out the reaction UTP + L-glutamine + ATP + H2O = CTP + L-glutamate + ADP + phosphate + 2 H(+). It catalyses the reaction L-glutamine + H2O = L-glutamate + NH4(+). The enzyme catalyses UTP + NH4(+) + ATP = CTP + ADP + phosphate + 2 H(+). The protein operates within pyrimidine metabolism; CTP biosynthesis via de novo pathway; CTP from UDP: step 2/2. With respect to regulation, allosterically activated by GTP, when glutamine is the substrate; GTP has no effect on the reaction when ammonia is the substrate. The allosteric effector GTP functions by stabilizing the protein conformation that binds the tetrahedral intermediate(s) formed during glutamine hydrolysis. Inhibited by the product CTP, via allosteric rather than competitive inhibition. In terms of biological role, catalyzes the ATP-dependent amination of UTP to CTP with either L-glutamine or ammonia as the source of nitrogen. Regulates intracellular CTP levels through interactions with the four ribonucleotide triphosphates. The polypeptide is CTP synthase (Bradyrhizobium diazoefficiens (strain JCM 10833 / BCRC 13528 / IAM 13628 / NBRC 14792 / USDA 110)).